The primary structure comprises 347 residues: GTPase Obg (347 aa).

The 159-residue stretch at 1-159 (MQFLDQAKIY…AWVWLRLKLL (159 aa)) folds into the Obg domain. Residues 124–144 (GRGNASYKSSTNRAPRQHGPG) form a disordered region. In terms of domain architecture, OBG-type G spans 160–327 (ADVGLVGLPN…ILDQLITMTG (168 aa)). GTP is bound by residues 166–173 (GLPNAGKS), 191–195 (FTTLH), 212–215 (DIPG), 279–282 (NKID), and 308–310 (SGA). The Mg(2+) site is built by Ser-173 and Thr-193.

This sequence belongs to the TRAFAC class OBG-HflX-like GTPase superfamily. OBG GTPase family. In terms of assembly, monomer. The cofactor is Mg(2+).

Its subcellular location is the cytoplasm. Functionally, an essential GTPase which binds GTP, GDP and possibly (p)ppGpp with moderate affinity, with high nucleotide exchange rates and a fairly low GTP hydrolysis rate. Plays a role in control of the cell cycle, stress response, ribosome biogenesis and in those bacteria that undergo differentiation, in morphogenesis control. This Zymomonas mobilis subsp. mobilis (strain ATCC 31821 / ZM4 / CP4) protein is GTPase Obg.